We begin with the raw amino-acid sequence, 606 residues long: Elongation factor 4 (606 aa).

Positions 10 to 192 (KNIRNFSIIA…ALVARVPPPQ (183 aa)) constitute a tr-type G domain. GTP contacts are provided by residues 22-27 (DHGKST) and 139-142 (NKID).

This sequence belongs to the TRAFAC class translation factor GTPase superfamily. Classic translation factor GTPase family. LepA subfamily.

The protein resides in the cell inner membrane. The enzyme catalyses GTP + H2O = GDP + phosphate + H(+). In terms of biological role, required for accurate and efficient protein synthesis under certain stress conditions. May act as a fidelity factor of the translation reaction, by catalyzing a one-codon backward translocation of tRNAs on improperly translocated ribosomes. Back-translocation proceeds from a post-translocation (POST) complex to a pre-translocation (PRE) complex, thus giving elongation factor G a second chance to translocate the tRNAs correctly. Binds to ribosomes in a GTP-dependent manner. This Nitrosococcus oceani (strain ATCC 19707 / BCRC 17464 / JCM 30415 / NCIMB 11848 / C-107) protein is Elongation factor 4.